A 72-amino-acid chain; its full sequence is Conotoxin Ep11.1 (72 aa).

Positions 1-19 (MKLCVTFLLILVILPSVTG) are cleaved as a signal peptide. Residues 20–32 (EKSSKRTLSGAAL) constitute a propeptide that is removed on maturation. Cystine bridges form between cysteine 39-cysteine 53, cysteine 46-cysteine 58, cysteine 52-cysteine 63, and cysteine 57-cysteine 70.

Belongs to the conotoxin I1 superfamily. In terms of tissue distribution, expressed by the venom duct.

Its subcellular location is the secreted. This is Conotoxin Ep11.1 from Conus episcopatus (Bishop's cone).